We begin with the raw amino-acid sequence, 152 residues long: Protein SprT-like (152 aa).

The SprT-like domain maps to Gln7–Ile148. His67 is a binding site for Zn(2+). Residue Glu68 is part of the active site. Position 71 (His71) interacts with Zn(2+).

This sequence belongs to the SprT family. The cofactor is Zn(2+).

Its subcellular location is the cytoplasm. This is Protein SprT-like from Bacillus thuringiensis subsp. konkukian (strain 97-27).